The primary structure comprises 347 residues: MNAPRCLRRLLERQWRQGGWLSTLLRPLAALTGLVVARKRNAYLTGARAAWRAPVPVVVVGNIYVGGTGKTPVVIEVVRQLQARGWTPGVVSRGYGVDVGAAPRVGQGQLAAADYGDEPALIARATGAAIAVHPHRPRAVQALLRAHPGVDVVVSDDGLQHLALARDVEIVVQDERGVGNGRLLPAGPLREPAQRLADVDAIVTNAGRPRAAAAPAAGAPRQLAMWLEPTHAQRVTDGATRTLADLAALPPARLAAAAGIGNPARFFQTLEQAGIRPAHTLALPDHYAYAQSPFTALDADLILVTAKDAIKCAALDDPRLWAVQVGTRLSDPDFGDWLSATLRARQP.

Residue 64–71 coordinates ATP; it reads YVGGTGKT.

Belongs to the LpxK family.

It catalyses the reaction a lipid A disaccharide + ATP = a lipid IVA + ADP + H(+). The protein operates within glycolipid biosynthesis; lipid IV(A) biosynthesis; lipid IV(A) from (3R)-3-hydroxytetradecanoyl-[acyl-carrier-protein] and UDP-N-acetyl-alpha-D-glucosamine: step 6/6. Functionally, transfers the gamma-phosphate of ATP to the 4'-position of a tetraacyldisaccharide 1-phosphate intermediate (termed DS-1-P) to form tetraacyldisaccharide 1,4'-bis-phosphate (lipid IVA). The chain is Tetraacyldisaccharide 4'-kinase from Bordetella bronchiseptica (strain ATCC BAA-588 / NCTC 13252 / RB50) (Alcaligenes bronchisepticus).